An 84-amino-acid polypeptide reads, in one-letter code: Cell division topological specificity factor (84 aa).

Belongs to the MinE family.

In terms of biological role, prevents the cell division inhibition by proteins MinC and MinD at internal division sites while permitting inhibition at polar sites. This ensures cell division at the proper site by restricting the formation of a division septum at the midpoint of the long axis of the cell. This chain is Cell division topological specificity factor, found in Rhodopseudomonas palustris (strain BisA53).